We begin with the raw amino-acid sequence, 609 residues long: Probable ubiquitin-conjugating enzyme E2 25 (609 aa).

2 disordered regions span residues 70–99 (EEDEYAVGSPGDDYGYPESSPLSNSLLDPE) and 151–185 (ADKESASSSKSSHANNGNNSSKKATKASGIHSQFS). Residues 156-178 (ASSSKSSHANNGNNSSKKATKAS) are compositionally biased toward low complexity. The UBC core domain maps to 332–492 (DWAKRIQDEW…TFILSLKTMV (161 aa)). Cys-418 acts as the Glycyl thioester intermediate in catalysis.

It belongs to the ubiquitin-conjugating enzyme family. In terms of tissue distribution, expressed in seeds, pistils, siliques, hypocotyls and leaves.

It carries out the reaction S-ubiquitinyl-[E1 ubiquitin-activating enzyme]-L-cysteine + [E2 ubiquitin-conjugating enzyme]-L-cysteine = [E1 ubiquitin-activating enzyme]-L-cysteine + S-ubiquitinyl-[E2 ubiquitin-conjugating enzyme]-L-cysteine.. It participates in protein modification; protein ubiquitination. Functionally, accepts the ubiquitin from the E1 complex and catalyzes its covalent attachment to other proteins. The chain is Probable ubiquitin-conjugating enzyme E2 25 (UBC25) from Arabidopsis thaliana (Mouse-ear cress).